The primary structure comprises 288 residues: MQQITLSKPVSCYGIGVHSGKRTQLTIEPAKENTGIIFIRTDISSENNYIEAKYFNVSDTLLSTTISNSNKIQVSTIEHIMAALWGCGIDNAVIKIDGPEVPIMDGSSKPFVFMIECAGKKLQNAPKKYLKILKEVTATHKDCELTCTPSDHMKIDLTIDFNSKAIGRQNLVFSKQESFNNNIADARTFGFTKDGDYLQSKGLALGVSFENTIAIDDQDKVLNPDGLRYQDEFVRHKLLDLFGDLYTSGNNIVSSINGYKTSHALNNELLQRIFSDNTSHKFVTASEI.

The Zn(2+) site is built by histidine 79, histidine 236, and aspartate 240. The active-site Proton donor is histidine 263.

It belongs to the LpxC family. Requires Zn(2+) as cofactor.

It catalyses the reaction a UDP-3-O-[(3R)-3-hydroxyacyl]-N-acetyl-alpha-D-glucosamine + H2O = a UDP-3-O-[(3R)-3-hydroxyacyl]-alpha-D-glucosamine + acetate. Its pathway is glycolipid biosynthesis; lipid IV(A) biosynthesis; lipid IV(A) from (3R)-3-hydroxytetradecanoyl-[acyl-carrier-protein] and UDP-N-acetyl-alpha-D-glucosamine: step 2/6. Catalyzes the hydrolysis of UDP-3-O-myristoyl-N-acetylglucosamine to form UDP-3-O-myristoylglucosamine and acetate, the committed step in lipid A biosynthesis. This is UDP-3-O-acyl-N-acetylglucosamine deacetylase from Rickettsia bellii (strain OSU 85-389).